Consider the following 120-residue polypeptide: U13-lycotoxin-Ls1c (120 aa).

The first 16 residues, 1 to 16 (MKILFVLISILYAVYC), serve as a signal peptide directing secretion. Positions 17–54 (FSSEEDVDSAYLANELEPVEDINSEQYAALEPKEEQER) are excised as a propeptide. 3 cysteine pairs are disulfide-bonded: Cys-56-Cys-70, Cys-69-Cys-87, and Cys-78-Cys-85. Positions 56 to 95 (CADMGQDRKDDCDCCLNIATCNCWFGRYFCSCTFGDYQTC) constitute an Agouti domain.

This sequence belongs to the neurotoxin 05 (agouti) family. In terms of processing, contains 5 disulfide bonds. Expressed by the venom gland.

It localises to the secreted. The polypeptide is U13-lycotoxin-Ls1c (Lycosa singoriensis (Wolf spider)).